The sequence spans 1252 residues: Myosin-3 (1252 aa).

The Myosin motor domain maps to 36-715 (VGVSDLTLLS…TLFALENMRD (680 aa)). 129–136 (GESGAGKT) is an ATP binding site. A Phosphoserine modification is found at S357. Positions 404–486 (SIGILDIYGF…PGIFAAMNDA (83 aa)) are actin-binding. IQ domains follow at residues 719–739 (YNMAARIQRAWRRYLQKRIDA) and 740–767 (AIRIQNAIRGKSGVSTFRNDELRNAGDK). Positions 773-963 (KERRNMSLLG…TILVRHGNPP (191 aa)) constitute a TH1 domain. Disordered regions lie at residues 988-1086 (KTMK…KTSV), 1106-1136 (YSLPENIPQSSQTDSYQAAYDFPGSGNPSEL), and 1203-1252 (INEP…DDDW). The segment covering 997-1016 (KRTPQALPTSSLAASAAQAA) has biased composition (low complexity). Polar residues-rich tracts occupy residues 1050-1063 (PVRNTSKTISNSKV), 1106-1121 (YSLPENIPQSSQTDSY), and 1203-1219 (INEPETHTNQGPSNTDL). Residues 1116 to 1178 (SQTDSYQAAY…PTSYIVKYNG (63 aa)) enclose the SH3 domain. Positions 1238–1252 (SEEDISREEDDDDDW) are enriched in acidic residues.

It belongs to the TRAFAC class myosin-kinesin ATPase superfamily. Myosin family. In terms of processing, phosphorylation of the TEDS site (Ser-357) is required for the polarization of the actin cytoskeleton. Phosphorylation probably activates the myosin-I ATPase activity.

The protein resides in the cytoplasm. It is found in the cytoskeleton. Its subcellular location is the actin patch. Its function is as follows. Type-I myosin implicated in the organization of the actin cytoskeleton. Required for proper actin cytoskeleton polarization. At the cell cortex, assembles in patch-like structures together with proteins from the actin-polymerizing machinery and promotes actin assembly. Functions as actin nucleation-promoting factor (NPF) for the Arp2/3 complex. In Candida glabrata (strain ATCC 2001 / BCRC 20586 / JCM 3761 / NBRC 0622 / NRRL Y-65 / CBS 138) (Yeast), this protein is Myosin-3 (MYO3).